A 1265-amino-acid chain; its full sequence is 1-phosphatidylinositol 4,5-bisphosphate phosphodiesterase gamma-2 (1265 aa).

The PH domain occupies 20–131 (RALELGTVMT…WLSGLKILHQ (112 aa)). Residues 312 to 456 (QDMNNPLSHY…LREKIIIKHK (145 aa)) form the PI-PLC X-box domain. Catalysis depends on residues histidine 327 and histidine 372. 2 consecutive SH2 domains span residues 532–635 (WFHK…TDPV) and 646–735 (WYYD…RYPV). 2 positions are modified to phosphotyrosine; by BTK: tyrosine 753 and tyrosine 759. The 61-residue stretch at 769–829 (MPQRTVKALY…PSNYVEDISA (61 aa)) folds into the SH3 domain. The PI-PLC Y-box domain maps to 930–1044 (LSDLVVYCKP…GYVLQPESMR (115 aa)). Residues 1038–1169 (LQPESMRSEK…SGFRSVPLKN (132 aa)) form the C2 domain. Tyrosine 1197 bears the Phosphotyrosine; by BTK mark. Tyrosine 1217 and tyrosine 1245 each carry phosphotyrosine.

Part of a complex composed of EEIG1, TNFRSF11A/RANK, PLCG2, GAB2, TEC and BTK; complex formation increases in the presence of TNFSF11/RANKL. Interacts (via SH2 domain) with CSF1R (tyrosine phosphorylated). Interacts constitutively with THEMIS2. It depends on Ca(2+) as a cofactor. Post-translationally, phosphorylated on tyrosine residues by CSF1R. Phosphorylated on tyrosine residues by BTK and SYK; upon ligand-induced activation of a variety of growth factor receptors and immune system receptors. Phosphorylation leads to increased phospholipase activity.

It localises to the membrane raft. It catalyses the reaction a 1,2-diacyl-sn-glycero-3-phospho-(1D-myo-inositol-4,5-bisphosphate) + H2O = 1D-myo-inositol 1,4,5-trisphosphate + a 1,2-diacyl-sn-glycerol + H(+). Functionally, the production of the second messenger molecules diacylglycerol (DAG) and inositol 1,4,5-trisphosphate (IP3) is mediated by activated phosphatidylinositol-specific phospholipase C enzymes. It is a crucial enzyme in transmembrane signaling. The sequence is that of 1-phosphatidylinositol 4,5-bisphosphate phosphodiesterase gamma-2 from Rattus norvegicus (Rat).